We begin with the raw amino-acid sequence, 3013 residues long: Protein furry homolog-like (3013 aa).

Ser-2 carries the N-acetylserine modification. Residues 90–109 (DESYEYRPRSSTKSKGDEQQ) form a disordered region. Ser-844 is subject to Phosphoserine. Disordered stretches follow at residues 878–897 (SSSTSAGSVRCSPPETLAST) and 1476–1498 (VTSGTTSSSNTMVAPTDGNPDNK). Residues 1476–1486 (VTSGTTSSSNT) are compositionally biased toward low complexity. A phosphoserine mark is found at Ser-1914, Ser-1935, Ser-1941, Ser-1945, and Ser-1957. Thr-1959 carries the phosphothreonine modification. Ser-1978, Ser-2272, and Ser-2454 each carry phosphoserine. The tract at residues 2459–2492 (DKGDTPSLQEYQCSSSTPSLNLTNQEDTDESSEE) is disordered. Over residues 2464-2483 (PSLQEYQCSSSTPSLNLTNQ) the composition is skewed to polar residues. Residue Ser-2499 is modified to Phosphoserine. Disordered regions lie at residues 2508-2567 (LNSD…DTTS) and 2636-2660 (EEEADFSGLSSQDEEEQDGFPEVQT). Composition is skewed to polar residues over residues 2528-2539 (SEDSTGSITTEE) and 2555-2567 (DNANSRLPEDTTS).

The protein belongs to the furry protein family. As to expression, widely expressed with higher expression in colon, placenta, brain and cells of lymphoid origin.

Plays a key role in maintaining the integrity of polarized cell extensions during morphogenesis, regulates the actin cytoskeleton and plays a key role in patterning sensory neuron dendritic fields by promoting avoidance between homologous dendrites as well as by limiting dendritic branching. May function as a transcriptional activator. The chain is Protein furry homolog-like (FRYL) from Homo sapiens (Human).